A 1418-amino-acid polypeptide reads, in one-letter code: Protein ced-11 (1418 aa).

Transmembrane regions (helical) follow at residues 617–637, 755–775, 782–802, 818–838, 856–876, 898–918, and 986–1006; these read FPIF…IIPV, YWLS…SVVL, LWDT…CFVL, VFDV…KVFP, VVSA…YIPL, FLFM…AVVF, and IVIE…FAFF.

Its subcellular location is the membrane. Functionally, plays a major role in programmed cell death. This Caenorhabditis elegans protein is Protein ced-11 (ced-11).